The primary structure comprises 271 residues: MTQVQKIHPTAVIDPQAELAPDVEVGAFTVIGPNVRIDSGTRIGHHTVVEGYTTLGRDNQIGHFASVGGRPQDMKYRDEPTRLIVGDRNTIREFTTIHTGTAQDVGITSIGDDNWIMAYVHIAHDCRIGNHTVFSSNAQIAGHVEVGDWAILGGMSGVHQFVRIGAHAMLGGASALVQDVPPFVIAASDKGGNKAAPHGVNVVGLQRRGFSAEQIAGLRQAYKLLYKSDLSFDQAQAEIAAQVAQTEDAPSREALRTFADFIAATKRGIVR.

Belongs to the transferase hexapeptide repeat family. LpxA subfamily. Homotrimer.

Its subcellular location is the cytoplasm. It carries out the reaction a (3R)-hydroxyacyl-[ACP] + UDP-N-acetyl-alpha-D-glucosamine = a UDP-3-O-[(3R)-3-hydroxyacyl]-N-acetyl-alpha-D-glucosamine + holo-[ACP]. Its pathway is glycolipid biosynthesis; lipid IV(A) biosynthesis; lipid IV(A) from (3R)-3-hydroxytetradecanoyl-[acyl-carrier-protein] and UDP-N-acetyl-alpha-D-glucosamine: step 1/6. Functionally, involved in the biosynthesis of lipid A, a phosphorylated glycolipid that anchors the lipopolysaccharide to the outer membrane of the cell. This Ralstonia nicotianae (strain ATCC BAA-1114 / GMI1000) (Ralstonia solanacearum) protein is Acyl-[acyl-carrier-protein]--UDP-N-acetylglucosamine O-acyltransferase.